Consider the following 339-residue polypeptide: Protein RecA (339 aa).

ATP is bound at residue G66–T73.

The protein belongs to the RecA family.

The protein resides in the cytoplasm. Functionally, can catalyze the hydrolysis of ATP in the presence of single-stranded DNA, the ATP-dependent uptake of single-stranded DNA by duplex DNA, and the ATP-dependent hybridization of homologous single-stranded DNAs. It interacts with LexA causing its activation and leading to its autocatalytic cleavage. The protein is Protein RecA of Geobacter metallireducens (strain ATCC 53774 / DSM 7210 / GS-15).